The sequence spans 88 residues: Small ribosomal subunit protein bS16c (88 aa).

This sequence belongs to the bacterial ribosomal protein bS16 family.

The protein resides in the plastid. Its subcellular location is the chloroplast. In Gossypium hirsutum (Upland cotton), this protein is Small ribosomal subunit protein bS16c.